A 307-amino-acid chain; its full sequence is Homoserine O-acetyltransferase (307 aa).

The active-site Acyl-thioester intermediate is the Cys142. Positions 163 and 192 each coordinate substrate. Catalysis depends on His235, which acts as the Proton acceptor. The active site involves Glu237. Residue Arg249 coordinates substrate.

It belongs to the MetA family.

It is found in the cytoplasm. The catalysed reaction is L-homoserine + acetyl-CoA = O-acetyl-L-homoserine + CoA. Its pathway is amino-acid biosynthesis; L-methionine biosynthesis via de novo pathway; O-acetyl-L-homoserine from L-homoserine: step 1/1. Its function is as follows. Transfers an acetyl group from acetyl-CoA to L-homoserine, forming acetyl-L-homoserine. The chain is Homoserine O-acetyltransferase from Desulfitobacterium hafniense (strain Y51).